Here is a 357-residue protein sequence, read N- to C-terminus: Mitochondrial carrier protein LEU5 (357 aa).

The next 6 helical transmembrane spans lie at 31–47 (DYIV…GSCA), 103–119 (LRIF…YEQI), 136–153 (LVSG…TYPL), 208–228 (VPTV…HDLL), 269–285 (ISGG…AYPF), and 325–347 (GFFV…SFFV). Solcar repeat units lie at residues 31-122 (DYIV…IRNT), 130-231 (ESHW…LHDV), and 262-354 (LRTW…MKWN).

Belongs to the mitochondrial carrier (TC 2.A.29) family.

Its subcellular location is the mitochondrion inner membrane. In terms of biological role, required for the accumulation of coenzyme A in the mitochondrial matrix. The protein is Mitochondrial carrier protein LEU5 (LEU5) of Saccharomyces cerevisiae (strain ATCC 204508 / S288c) (Baker's yeast).